The primary structure comprises 354 residues: Probable L-ascorbate-6-phosphate lactonase UlaG (354 aa).

Belongs to the UlaG family. A divalent metal cation is required as a cofactor.

The protein localises to the cytoplasm. The enzyme catalyses L-ascorbate 6-phosphate + H2O = 3-dehydro-L-gulonate 6-phosphate. The protein operates within cofactor degradation; L-ascorbate degradation; D-xylulose 5-phosphate from L-ascorbate: step 1/4. Probably catalyzes the hydrolysis of L-ascorbate-6-P into 3-keto-L-gulonate-6-P. Is essential for L-ascorbate utilization under anaerobic conditions. The chain is Probable L-ascorbate-6-phosphate lactonase UlaG from Salmonella agona (strain SL483).